A 223-amino-acid polypeptide reads, in one-letter code: RNA-free ribonuclease P (223 aa).

This sequence belongs to the HARP family.

The enzyme catalyses Endonucleolytic cleavage of RNA, removing 5'-extranucleotides from tRNA precursor.. Functionally, RNA-free RNase P that catalyzes the removal of the 5'-leader sequence from pre-tRNA to produce the mature 5'-terminus. The sequence is that of RNA-free ribonuclease P from Methanococcus maripaludis (strain DSM 14266 / JCM 13030 / NBRC 101832 / S2 / LL).